Here is a 397-residue protein sequence, read N- to C-terminus: MVDRIDPLDITNIKDLSTWMKTKNWRNIAKLEPCRFKESGRGMRTRKGLKAGQLLVQIPRLLLMTAGDFRTSKEWSWIVDKNLSCHDALVLYLLVEKNKRDSSFFHAYIKTLPEVFSMPTDLRSEMTHMLPNFIAMKLQDKIKSLQDSFKNVARGYKSICIKELGFSDFKWAYYVVNTRAVHITGSSGKFNADSSDCMALAPFLDLLNHTHDTSSISGFNPYTNCYEIETLSKTPKCSEVFINYGPHDNLSLFVEYGFMIPRNPNNFVPFEMTDFISACNEYNVKLSNLCLQTINLHNLMKNLGCFADGPSWSVKVLLKVLSCDWSSLMRIEDIIYRDFENHGLTEKTLLNCILEKKKEELQNSLSTIAKDKNCQIANCIVSFLEECLSIIEFSYAN.

The region spanning Ala29–Gly245 is the SET domain. Tyr244 contributes to the S-adenosyl-L-methionine binding site.

The protein belongs to the class V-like SAM-binding methyltransferase superfamily. SETD4 family.

The protein resides in the nucleus. The enzyme catalyses L-lysyl(79)-[histone H3] + 3 S-adenosyl-L-methionine = N(6),N(6),N(6)-trimethyl-L-lysyl(79)-[histone H3] + 3 S-adenosyl-L-homocysteine + 3 H(+). The catalysed reaction is L-lysyl(20)-[histone H4] + S-adenosyl-L-methionine = N(6)-methyl-L-lysyl(20)-[histone H4] + S-adenosyl-L-homocysteine + H(+). It carries out the reaction N(6)-methyl-L-lysyl(20)-[histone H4] + S-adenosyl-L-methionine = N(6),N(6)-dimethyl-L-lysyl(20)-[histone H4] + S-adenosyl-L-homocysteine + H(+). It catalyses the reaction N(6),N(6)-dimethyl-L-lysyl(20)-[histone H4] + S-adenosyl-L-methionine = N(6),N(6),N(6)-trimethyl-L-lysyl(20)-[histone H4] + S-adenosyl-L-homocysteine + H(+). Functionally, protein-lysine N-methyltransferase involved in the regulation of cell quiescence by catalyzing the trimethylation of 'Lys-20' of histone H4 and 'Lys-79' of histone H3 (H4K20me3 and H3K79me3, respectively) during diapause formation, a state of obligate dormancy. This chain is SET domain-containing protein 4, found in Artemia parthenogenetica (Brine shrimp).